The following is a 932-amino-acid chain: DNA mismatch repair protein MutS (932 aa).

Residue 615 to 622 coordinates ATP; sequence GPNMAGKS.

It belongs to the DNA mismatch repair MutS family.

In terms of biological role, this protein is involved in the repair of mismatches in DNA. It is possible that it carries out the mismatch recognition step. This protein has a weak ATPase activity. The sequence is that of DNA mismatch repair protein MutS from Clostridium botulinum (strain Okra / Type B1).